Consider the following 219-residue polypeptide: Large ribosomal subunit protein uL3 (219 aa).

The disordered stretch occupies residues 136-156 (GASHGAHRNHRKPGSIGGCAT).

This sequence belongs to the universal ribosomal protein uL3 family. As to quaternary structure, part of the 50S ribosomal subunit. Forms a cluster with proteins L14 and L19.

Its function is as follows. One of the primary rRNA binding proteins, it binds directly near the 3'-end of the 23S rRNA, where it nucleates assembly of the 50S subunit. The polypeptide is Large ribosomal subunit protein uL3 (Kineococcus radiotolerans (strain ATCC BAA-149 / DSM 14245 / SRS30216)).